The following is a 172-amino-acid chain: ATP synthase subunit b (172 aa).

The helical transmembrane segment at 11–30 threads the bilayer; sequence LIAQIINFVIVLWVLNRFAF.

Belongs to the ATPase B chain family. In terms of assembly, F-type ATPases have 2 components, F(1) - the catalytic core - and F(0) - the membrane proton channel. F(1) has five subunits: alpha(3), beta(3), gamma(1), delta(1), epsilon(1). F(0) has three main subunits: a(1), b(2) and c(10-14). The alpha and beta chains form an alternating ring which encloses part of the gamma chain. F(1) is attached to F(0) by a central stalk formed by the gamma and epsilon chains, while a peripheral stalk is formed by the delta and b chains.

It is found in the cell inner membrane. F(1)F(0) ATP synthase produces ATP from ADP in the presence of a proton or sodium gradient. F-type ATPases consist of two structural domains, F(1) containing the extramembraneous catalytic core and F(0) containing the membrane proton channel, linked together by a central stalk and a peripheral stalk. During catalysis, ATP synthesis in the catalytic domain of F(1) is coupled via a rotary mechanism of the central stalk subunits to proton translocation. In terms of biological role, component of the F(0) channel, it forms part of the peripheral stalk, linking F(1) to F(0). The protein is ATP synthase subunit b of Methylacidiphilum infernorum (isolate V4) (Methylokorus infernorum (strain V4)).